The following is a 438-amino-acid chain: 3-phosphoshikimate 1-carboxyvinyltransferase (438 aa).

3-phosphoshikimate-binding residues include K25, S26, and R30. Residue K25 participates in phosphoenolpyruvate binding. G99 and R128 together coordinate phosphoenolpyruvate. Positions 173, 175, 325, and 352 each coordinate 3-phosphoshikimate. Phosphoenolpyruvate is bound at residue Q175. D325 acts as the Proton acceptor in catalysis. Positions 356 and 398 each coordinate phosphoenolpyruvate.

The protein belongs to the EPSP synthase family. As to quaternary structure, monomer.

The protein resides in the cytoplasm. It catalyses the reaction 3-phosphoshikimate + phosphoenolpyruvate = 5-O-(1-carboxyvinyl)-3-phosphoshikimate + phosphate. It functions in the pathway metabolic intermediate biosynthesis; chorismate biosynthesis; chorismate from D-erythrose 4-phosphate and phosphoenolpyruvate: step 6/7. Catalyzes the transfer of the enolpyruvyl moiety of phosphoenolpyruvate (PEP) to the 5-hydroxyl of shikimate-3-phosphate (S3P) to produce enolpyruvyl shikimate-3-phosphate and inorganic phosphate. This is 3-phosphoshikimate 1-carboxyvinyltransferase from Prochlorococcus marinus subsp. pastoris (strain CCMP1986 / NIES-2087 / MED4).